The sequence spans 471 residues: Elongation factor 1-alpha (471 aa).

In terms of domain architecture, tr-type G spans 10–239 (KPRLNACFIG…EALNYQDVPE (230 aa)). Positions 19–26 (GHVDSGKS) are G1. 19 to 26 (GHVDSGKS) is a binding site for GTP. The G2 stretch occupies residues 75–79 (GITIT). A G3 region spans residues 96 to 99 (DCPG). GTP-binding positions include 96–100 (DCPGH) and 156–159 (NKMD). Positions 156–159 (NKMD) are G4. The segment at 196–198 (SAF) is G5.

Belongs to the TRAFAC class translation factor GTPase superfamily. Classic translation factor GTPase family. EF-Tu/EF-1A subfamily. As to quaternary structure, component of the eukaryotic elongation factor 1 complex (eEF1).

The protein localises to the cytoplasm. It functions in the pathway protein biosynthesis; polypeptide chain elongation. In terms of biological role, GTP-binding component of the eukaryotic elongation factor 1 complex (eEF1). In its active GTP-bound form, binds to and delivers aminoacyl-tRNA to the A-site of ribosomes during protein biosynthesis. In the presence of a correct codon-anticodon match between the aminoacyl-tRNA and the A-site codon of the ribosome-bound mRNA, the ribosome acts as a GTPase activator and the GTP is hydrolyzed. The inactive GDP-bound form leaves the ribosome and must be recycled by its guanine nucleotide exchange factor (GEF) (eEF1B subcomplex) before binding another molecule of aminoacyl-tRNA. Required for nuclear export of aminoacyl-tRNAs. May also be involved in translational quality control by targeting cotranslationally damaged proteins to the proteasome. This is Elongation factor 1-alpha (TEF1) from Encephalitozoon cuniculi (strain GB-M1) (Microsporidian parasite).